Reading from the N-terminus, the 947-residue chain is Translation initiation factor IF-2 (947 aa).

Residues 69-353 (RRRKEVPQEE…TPKPQKKTEV (285 aa)) are disordered. Residues 81 to 108 (APPAAAEEPSSVDTAVAEEAPAEEVQPV) are compositionally biased toward low complexity. Residues 139–155 (PVVEEVIAEPAVEEVVE) show a composition bias toward acidic residues. 2 stretches are compositionally biased toward basic and acidic residues: residues 215 to 226 (VTKEKPKVEKAT) and 246 to 262 (KRQE…ERPK). The span at 264–284 (AKPSGGPAPRAKEAAPQAAVP) shows a compositional bias: low complexity. A compositionally biased stretch (basic and acidic residues) spans 327 to 337 (QVYEPERDERR). Residues 338-348 (MRRGKKTPKPQ) are compositionally biased toward basic residues. The 170-residue stretch at 447 to 616 (PRPPVVTIMG…LLQAEVLELK (170 aa)) folds into the tr-type G domain. The interval 456 to 463 (GHVDHGKT) is G1. 456 to 463 (GHVDHGKT) is a binding site for GTP. Residues 481–485 (GITQH) are G2. The G3 stretch occupies residues 502-505 (DTPG). GTP contacts are provided by residues 502-506 (DTPGH) and 556-559 (NKMD). The segment at 556–559 (NKMD) is G4. Residues 592 to 594 (SAK) form a G5 region.

It belongs to the TRAFAC class translation factor GTPase superfamily. Classic translation factor GTPase family. IF-2 subfamily.

The protein localises to the cytoplasm. Its function is as follows. One of the essential components for the initiation of protein synthesis. Protects formylmethionyl-tRNA from spontaneous hydrolysis and promotes its binding to the 30S ribosomal subunits. Also involved in the hydrolysis of GTP during the formation of the 70S ribosomal complex. This chain is Translation initiation factor IF-2, found in Syntrophotalea carbinolica (strain DSM 2380 / NBRC 103641 / GraBd1) (Pelobacter carbinolicus).